The sequence spans 218 residues: Acetyl- and succinyl-CoA transferase MT0822 (218 aa).

The 157-residue stretch at 32–188 (DTILEGVHDP…EALLFRLTRD (157 aa)) folds into the N-acetyltransferase domain. Substrate-binding positions include Gln94, 109–113 (SGSWL), 119–124 (GHGYGT), 145–151 (SRSFVDN), and Arg160.

As to quaternary structure, dimer of dimers.

The catalysed reaction is L-lysyl-[protein] + acetyl-CoA = N(6)-acetyl-L-lysyl-[protein] + CoA + H(+). It carries out the reaction succinyl-CoA + L-lysyl-[protein] = N(6)-succinyl-L-lysyl-[protein] + CoA + H(+). Acetylates and succinylates nucleoid-associated, DNA-binding protein HupB. In Mycobacterium tuberculosis (strain CDC 1551 / Oshkosh), this protein is Acetyl- and succinyl-CoA transferase MT0822.